A 58-amino-acid polypeptide reads, in one-letter code: MVNLLQIVRDHWVHVLVPMGFVIGCYLDKKSDEQLTAFRNKSMLFKRELQPNEEVTWK.

Residues 11-27 (HWVHVLVPMGFVIGCYL) form a helical membrane-spanning segment.

Belongs to the complex I NDUFB1 subunit family. As to quaternary structure, complex I is composed of 45 different subunits.

It is found in the mitochondrion inner membrane. In terms of biological role, accessory subunit of the mitochondrial membrane respiratory chain NADH dehydrogenase (Complex I) that is believed not to be involved in catalysis. Complex I functions in the transfer of electrons from NADH to the respiratory chain. The immediate electron acceptor for the enzyme is believed to be ubiquinone. The polypeptide is NADH dehydrogenase [ubiquinone] 1 beta subcomplex subunit 1 (NDUFB1) (Pongo pygmaeus (Bornean orangutan)).